A 328-amino-acid chain; its full sequence is Tetraacyldisaccharide 4'-kinase (328 aa).

Residue 55–62 (TAGGNGKT) participates in ATP binding.

This sequence belongs to the LpxK family.

It catalyses the reaction a lipid A disaccharide + ATP = a lipid IVA + ADP + H(+). It participates in glycolipid biosynthesis; lipid IV(A) biosynthesis; lipid IV(A) from (3R)-3-hydroxytetradecanoyl-[acyl-carrier-protein] and UDP-N-acetyl-alpha-D-glucosamine: step 6/6. Its function is as follows. Transfers the gamma-phosphate of ATP to the 4'-position of a tetraacyldisaccharide 1-phosphate intermediate (termed DS-1-P) to form tetraacyldisaccharide 1,4'-bis-phosphate (lipid IVA). The chain is Tetraacyldisaccharide 4'-kinase from Yersinia pseudotuberculosis serotype I (strain IP32953).